Here is a 440-residue protein sequence, read N- to C-terminus: Cell division protein FtsA (440 aa).

Belongs to the FtsA/MreB family. As to quaternary structure, self-interacts. Interacts with FtsZ.

It localises to the cell membrane. Its function is as follows. Cell division protein that is involved in the assembly of the Z ring. May serve as a membrane anchor for the Z ring. The protein is Cell division protein FtsA of Enterococcus faecalis (strain ATCC 700802 / V583).